Here is a 133-residue protein sequence, read N- to C-terminus: MTFTRFVEAGRVALVSYGEHLNKLVVIVDILDQNRILVDSPSHGLKRKVINVKRIALTSIKVDDIARGAPVAEVKSKYTAAKVDETFAASGWGKKLAKREKRAALDDFGRFKVMVARMKKSKAINAELAKLKA.

It belongs to the eukaryotic ribosomal protein eL14 family.

The chain is Large ribosomal subunit protein eL14 (RPL14) from Griffithsia japonica (Red alga).